The following is a 78-amino-acid chain: Acyl carrier protein (78 aa).

Residues 1 to 76 (MALFEDIQAV…DVVKYIEDNK (76 aa)) enclose the Carrier domain. Serine 36 carries the O-(pantetheine 4'-phosphoryl)serine modification.

Belongs to the acyl carrier protein (ACP) family. 4'-phosphopantetheine is transferred from CoA to a specific serine of apo-ACP by AcpS. This modification is essential for activity because fatty acids are bound in thioester linkage to the sulfhydryl of the prosthetic group.

It localises to the cytoplasm. It participates in lipid metabolism; fatty acid biosynthesis. Carrier of the growing fatty acid chain in fatty acid biosynthesis. In Helicobacter acinonychis (strain Sheeba), this protein is Acyl carrier protein.